Here is a 97-residue protein sequence, read N- to C-terminus: Acylphosphatase (97 aa).

The 88-residue stretch at 5–92 (RAHVWISGRV…GEFVRFEITF (88 aa)) folds into the Acylphosphatase-like domain. Catalysis depends on residues arginine 20 and asparagine 38.

It belongs to the acylphosphatase family.

It carries out the reaction an acyl phosphate + H2O = a carboxylate + phosphate + H(+). This Syntrophobacter fumaroxidans (strain DSM 10017 / MPOB) protein is Acylphosphatase (acyP).